We begin with the raw amino-acid sequence, 585 residues long: Arginine--tRNA ligase (585 aa).

A 'HIGH' region motif is present at residues 131-141; it reads ANPTGPMHVGH.

This sequence belongs to the class-I aminoacyl-tRNA synthetase family. Monomer.

It localises to the cytoplasm. The enzyme catalyses tRNA(Arg) + L-arginine + ATP = L-arginyl-tRNA(Arg) + AMP + diphosphate. This chain is Arginine--tRNA ligase, found in Rhizobium etli (strain ATCC 51251 / DSM 11541 / JCM 21823 / NBRC 15573 / CFN 42).